The sequence spans 227 residues: Ornithine decarboxylase antizyme 1 (227 aa).

The interval 20-50 (EGDKPSATVHATRTMPLLSLHSRGGRSSESS) is disordered. A compositionally biased stretch (low complexity) spans 36–50 (LLSLHSRGGRSSESS).

The protein belongs to the ODC antizyme family. Interacts with ODC1 and thereby sterically blocks ODC homodimerization. Forms a ternary complex with PSMB4 and OAZ1 before PSMB4 is incorporated into the 20S proteasome. Interacts with AZIN2; this interaction disrupts the interaction between the antizyme and ODC1. Interacts with FAM171A1.

Its function is as follows. Ornithine decarboxylase (ODC) antizyme protein that negatively regulates ODC activity and intracellular polyamine biosynthesis and uptake in response to increased intracellular polyamine levels. Binds to ODC monomers, inhibiting the assembly of the functional ODC homodimer, and targets the monomers for ubiquitin-independent proteolytic destruction by the 26S proteasome. Triggers ODC degradation by inducing the exposure of a cryptic proteasome-interacting surface of ODC. Stabilizes AZIN2 by interfering with its ubiquitination. Also inhibits cellular uptake of polyamines by inactivating the polyamine uptake transporter. SMAD1/OAZ1/PSMB4 complex mediates the degradation of the CREBBP/EP300 repressor SNIP1. Involved in the translocation of AZIN2 from ER-Golgi intermediate compartment (ERGIC) to the cytosol. The chain is Ornithine decarboxylase antizyme 1 (OAZ1) from Bos taurus (Bovine).